A 606-amino-acid polypeptide reads, in one-letter code: Radial spoke head protein 3 homolog (606 aa).

Positions 1 to 103 (MARSEARRQA…NSPEAPPLDG (103 aa)) are disordered. Residues 15–46 (PRAVPEERALRERRQPRPRREPLESGAGDHRR) show a composition bias toward basic and acidic residues. Thr-331 bears the Phosphothreonine; by MAPK1 mark. The stretch at 393–429 (AYEELRNIELAEVQRLEEQERRHREEKERRKQQQWQV) forms a coiled coil. The segment at 520–606 (EGRHASVRPE…KSSKREELSQ (87 aa)) is disordered. A compositionally biased stretch (polar residues) spans 547-556 (SQDQGASQAQ). Residues 572-604 (ARYAERVSSQERRLAEENDELTEMRKSSKREEL) adopt a coiled-coil conformation. Positions 573 to 606 (RYAERVSSQERRLAEENDELTEMRKSSKREELSQ) are enriched in basic and acidic residues.

Belongs to the flagellar radial spoke RSP3 family. As to quaternary structure, component of the axonemal radial spoke 1 (RS1) and 2 (RS2) complexes, at least composed of spoke head proteins RSPH1, RSPH3, RSPH9 and the cilia-specific component RSPH4A or sperm-specific component RSPH6A, spoke stalk proteins RSPH14, DNAJB13, DYDC1, ROPN1L and NME5, and the RS1 complex-specific anchor protein IQUB. Interacts with IQUB. Interacts with phosphorylated MAPK1. Interacts with MEK1. Interacts with PKA regulatory subunits PRKAR1A and PRKAR1B. Interacts with RSPH1. Interacts with RSPH4A. Interacts with RSPH6A. Interacts with RSPH9. Interacts with LRRC23.

It is found in the cytoplasm. It localises to the cytoskeleton. The protein resides in the cilium axoneme. Its subcellular location is the flagellum axoneme. Functions as part of axonemal radial spoke complexes that play an important part in the motility of sperm and cilia. Functions as a protein kinase A-anchoring protein that scaffolds the cAMP-dependent protein kinase holoenzyme. May serve as a point of convergence for MAPK and PKA signaling in cilia. The sequence is that of Radial spoke head protein 3 homolog (RSPH3) from Bos taurus (Bovine).